We begin with the raw amino-acid sequence, 280 residues long: Endochitinase A (280 aa).

The signal sequence occupies residues 1–25 (MANAPRILALGLLALLCAAAGPAAA). Residues 26–60 (QNCGCQPNFCCSKFGYCGTTDAYCGDGCQSGPCRS) form the Chitin-binding type-1 domain. 4 disulfide bridges follow: Cys28–Cys36, Cys30–Cys42, Cys35–Cys49, and Cys53–Cys58. The interval 61 to 77 (GGGGGGGGGGGGGGSGG) is hinge region (poly-Gly). The tract at residues 78–280 (ANVANVVTDA…RVDPGPNLTC (203 aa)) is catalytic. Residues Cys100 and Cys149 are joined by a disulfide bond. Glu144 serves as the catalytic Proton donor. Residue Asn155 is glycosylated (N-linked (GlcNAc...) asparagine). 2 cysteine pairs are disulfide-bonded: Cys161–Cys170 and Cys248–Cys280. N-linked (GlcNAc...) asparagine glycosylation occurs at Asn277.

Belongs to the glycosyl hydrolase 19 family. Chitinase class IV subfamily.

It is found in the secreted. It carries out the reaction Random endo-hydrolysis of N-acetyl-beta-D-glucosaminide (1-&gt;4)-beta-linkages in chitin and chitodextrins.. Its activity is regulated as follows. Inactivated by l-ethyl-3-(3-dimethylaminopropyl)carbodiimide (EDC) in the absence of exogenous nucleophiles (e.g. GlcNAc4, GlcNAc3 and GlcNAc2). Not inhibited by tetra-N-acetylchitopentaose or modified chitotetraose substrate TMG-chitotriomycin-pMP, containing a free, non-acetylated glucosaminyl residue or a N-trimethylamino glucosamine (TMG) residue at the non-reducing terminus, respectively. In terms of biological role, defense against chitin-containing fungal pathogens. Hydrolyzes glycol chitin and tetra-N-acetylchitotetraose in vitro. Its action is countered by fungal polyglycine hydrolases and fungalysin, that cleave the chitin-binding domain from the protein. The sequence is that of Endochitinase A from Zea mays (Maize).